A 322-amino-acid chain; its full sequence is Protein-L-isoaspartate O-methyltransferase (322 aa).

The segment at 1–101 (MSGERAKRFP…AKQGDRSAAP (101 aa)) is disordered. Residues 14-29 (EDLKREPRKPEGRVAE) show a composition bias toward basic and acidic residues. Composition is skewed to low complexity over residues 33 to 51 (AGDA…PAAA) and 76 to 91 (HAPA…PQGG). Ser170 is a catalytic residue.

It belongs to the methyltransferase superfamily. L-isoaspartyl/D-aspartyl protein methyltransferase family.

The protein localises to the cytoplasm. The catalysed reaction is [protein]-L-isoaspartate + S-adenosyl-L-methionine = [protein]-L-isoaspartate alpha-methyl ester + S-adenosyl-L-homocysteine. In terms of biological role, catalyzes the methyl esterification of L-isoaspartyl residues in peptides and proteins that result from spontaneous decomposition of normal L-aspartyl and L-asparaginyl residues. It plays a role in the repair and/or degradation of damaged proteins. This is Protein-L-isoaspartate O-methyltransferase from Burkholderia pseudomallei (strain 1106a).